A 145-amino-acid chain; its full sequence is Large ribosomal subunit protein uL13 (145 aa).

It belongs to the universal ribosomal protein uL13 family. Part of the 50S ribosomal subunit.

Its function is as follows. This protein is one of the early assembly proteins of the 50S ribosomal subunit, although it is not seen to bind rRNA by itself. It is important during the early stages of 50S assembly. This chain is Large ribosomal subunit protein uL13, found in Listeria innocua serovar 6a (strain ATCC BAA-680 / CLIP 11262).